A 143-amino-acid chain; its full sequence is Ribosome-binding factor A (143 aa).

The interval 117–143 (DAEIARRSQGAMPAGEADPYRHSDEEE) is disordered. A compositionally biased stretch (basic and acidic residues) spans 134–143 (DPYRHSDEEE).

It belongs to the RbfA family. Monomer. Binds 30S ribosomal subunits, but not 50S ribosomal subunits or 70S ribosomes.

Its subcellular location is the cytoplasm. Functionally, one of several proteins that assist in the late maturation steps of the functional core of the 30S ribosomal subunit. Associates with free 30S ribosomal subunits (but not with 30S subunits that are part of 70S ribosomes or polysomes). Required for efficient processing of 16S rRNA. May interact with the 5'-terminal helix region of 16S rRNA. The sequence is that of Ribosome-binding factor A from Cutibacterium acnes (strain DSM 16379 / KPA171202) (Propionibacterium acnes).